A 266-amino-acid polypeptide reads, in one-letter code: Putative hydro-lyase VF_1377 (266 aa).

It belongs to the D-glutamate cyclase family.

This chain is Putative hydro-lyase VF_1377, found in Aliivibrio fischeri (strain ATCC 700601 / ES114) (Vibrio fischeri).